The sequence spans 698 residues: Probable threonine--tRNA ligase 2, cytoplasmic (698 aa).

The region spanning 38–100 (GGGNIKLNDG…EMSGKDYNIE (63 aa)) is the TGS domain. The disordered stretch occupies residues 541–560 (NNNNNNNNNNEEINDNNNNN).

The protein belongs to the class-II aminoacyl-tRNA synthetase family.

It is found in the cytoplasm. The catalysed reaction is tRNA(Thr) + L-threonine + ATP = L-threonyl-tRNA(Thr) + AMP + diphosphate + H(+). The sequence is that of Probable threonine--tRNA ligase 2, cytoplasmic (thrS2) from Dictyostelium discoideum (Social amoeba).